Consider the following 578-residue polypeptide: Proline--tRNA ligase (578 aa).

It belongs to the class-II aminoacyl-tRNA synthetase family. ProS type 1 subfamily. As to quaternary structure, homodimer.

Its subcellular location is the cytoplasm. The enzyme catalyses tRNA(Pro) + L-proline + ATP = L-prolyl-tRNA(Pro) + AMP + diphosphate. Its function is as follows. Catalyzes the attachment of proline to tRNA(Pro) in a two-step reaction: proline is first activated by ATP to form Pro-AMP and then transferred to the acceptor end of tRNA(Pro). As ProRS can inadvertently accommodate and process non-cognate amino acids such as alanine and cysteine, to avoid such errors it has two additional distinct editing activities against alanine. One activity is designated as 'pretransfer' editing and involves the tRNA(Pro)-independent hydrolysis of activated Ala-AMP. The other activity is designated 'posttransfer' editing and involves deacylation of mischarged Ala-tRNA(Pro). The misacylated Cys-tRNA(Pro) is not edited by ProRS. The chain is Proline--tRNA ligase from Brachyspira hyodysenteriae (strain ATCC 49526 / WA1).